Reading from the N-terminus, the 157-residue chain is SsrA-binding protein (157 aa).

The segment at 128-157 (LARGKKQHDKRAAEKERDWEREKQRVMRRG) is disordered. Residues 137 to 157 (KRAAEKERDWEREKQRVMRRG) show a composition bias toward basic and acidic residues.

The protein belongs to the SmpB family.

It is found in the cytoplasm. In terms of biological role, required for rescue of stalled ribosomes mediated by trans-translation. Binds to transfer-messenger RNA (tmRNA), required for stable association of tmRNA with ribosomes. tmRNA and SmpB together mimic tRNA shape, replacing the anticodon stem-loop with SmpB. tmRNA is encoded by the ssrA gene; the 2 termini fold to resemble tRNA(Ala) and it encodes a 'tag peptide', a short internal open reading frame. During trans-translation Ala-aminoacylated tmRNA acts like a tRNA, entering the A-site of stalled ribosomes, displacing the stalled mRNA. The ribosome then switches to translate the ORF on the tmRNA; the nascent peptide is terminated with the 'tag peptide' encoded by the tmRNA and targeted for degradation. The ribosome is freed to recommence translation, which seems to be the essential function of trans-translation. The polypeptide is SsrA-binding protein (Methylococcus capsulatus (strain ATCC 33009 / NCIMB 11132 / Bath)).